The sequence spans 433 residues: Enolase (433 aa).

Glutamine 164 contacts (2R)-2-phosphoglycerate. Glutamate 206 serves as the catalytic Proton donor. Residues aspartate 243, glutamate 289, and aspartate 316 each contribute to the Mg(2+) site. Residues lysine 341, arginine 370, serine 371, and lysine 392 each contribute to the (2R)-2-phosphoglycerate site. Lysine 341 acts as the Proton acceptor in catalysis.

It belongs to the enolase family. Mg(2+) serves as cofactor.

It is found in the cytoplasm. It localises to the secreted. The protein localises to the cell surface. The enzyme catalyses (2R)-2-phosphoglycerate = phosphoenolpyruvate + H2O. Its pathway is carbohydrate degradation; glycolysis; pyruvate from D-glyceraldehyde 3-phosphate: step 4/5. Functionally, catalyzes the reversible conversion of 2-phosphoglycerate (2-PG) into phosphoenolpyruvate (PEP). It is essential for the degradation of carbohydrates via glycolysis. In Borrelia hermsii (strain HS1 / DAH), this protein is Enolase.